Consider the following 360-residue polypeptide: Homeobox-leucine zipper protein HOX21 (360 aa).

Disordered regions lie at residues 25–75 (QQAA…SSAQ) and 88–126 (MLGKRPMSYGDGGGGGDEVNGGGEDELSDDGSQAGEKKR). Basic residues predominate over residues 36-55 (HHHHHHHGHHHEQQQHHHHL). A compositionally biased stretch (pro residues) spans 56 to 68 (GPPPPPPPHPHNP). A compositionally biased stretch (gly residues) spans 97–109 (GDGGGGGDEVNGG). Positions 121-180 (AGEKKRRLNVEQVRTLEKNFELGNKLEPERKMQLARALGLQPRQVAIWFQNRRARWKTKQ) form a DNA-binding region, homeobox. A leucine-zipper region spans residues 179–223 (KQLEKDYDALKRQLDAVKAENDALLNHNKKLQAEIVALKGREAAS). 2 disordered regions span residues 233–278 (EASC…GGGG) and 299–328 (GVDIDQLLHSSSGGAGGPKMEHHGGGGNVQ). The segment covering 234-246 (ASCSNRSENSSEI) has biased composition (polar residues).

Belongs to the HD-ZIP homeobox family. Class I subfamily. Expressed in seedlings, roots, stems, leaf blades and panicles.

The protein resides in the nucleus. In terms of biological role, probable transcription factor. The protein is Homeobox-leucine zipper protein HOX21 (HOX21) of Oryza sativa subsp. indica (Rice).